Here is a 90-residue protein sequence, read N- to C-terminus: Protein Z600 (90 aa).

Residues Thr22 and Thr48 each carry the phosphothreonine modification. Residues 46-65 (PATPSSSGHGKFQTELKKRR) are disordered.

In terms of assembly, component of the Frs-CycA-Cdk1 complex composed of Z600, CycA and Cdk1. Interacts preferentially with CycA (via C-terminus) but is also able to interact (via C-terminus) with CycE (via C-terminus).

The protein localises to the nucleus. Its function is as follows. Cell cycle regulator that is involved in modulating and adjusting cell proliferation according to the requirements of the developmental program. Interacts with mitotic Cdk1-cyclin complexes to inhibit mitotic entry at the G2/M transition. Likely to function by binding to the hydrophobic patch of cyclins to interfere with the interaction between the complex and certain Cdk1 substrates. At the mid-blastula transition, involved in the cell cycle arrest in G2 of cycle 14 by delaying mitosis and thus reducing cell proliferation allowing cell fate specification and morphogenesis to take place. Acts downstream or in parallel to the checkpoint regulator grp which is also required for the cell cycle pause at cycle 14. During gastrulation, delays mitosis in the ventral region of the embryonic mesoderm thus allowing invagination to be completed before cell division takes place. This is Protein Z600 from Drosophila melanogaster (Fruit fly).